We begin with the raw amino-acid sequence, 70 residues long: Brevinin-1MT1 (70 aa).

The signal sequence occupies residues 1–22 (MFTLKKSLLLLFFLGTINLSLC). Residues 23–44 (EQERDADEEERRDDDEMDVEVE) constitute a propeptide that is removed on maturation. Cysteines 64 and 70 form a disulfide.

This sequence belongs to the frog skin active peptide (FSAP) family. Brevinin subfamily. In terms of tissue distribution, expressed by the skin glands.

It is found in the secreted. In terms of biological role, antimicrobial peptide with activity against a variety of Gram-negative and Gram-positive bacteria and against fungi. Shows strong hemolytic activity against human erythrocytes. This chain is Brevinin-1MT1, found in Amolops mantzorum (Sichuan torrent frog).